Reading from the N-terminus, the 1367-residue chain is DNA polymerase III PolC-type (1367 aa).

Residues 358-513 (FVVLDFETTG…DDARVTAQVF (156 aa)) form the Exonuclease domain.

It belongs to the DNA polymerase type-C family. PolC subfamily.

It localises to the cytoplasm. The enzyme catalyses DNA(n) + a 2'-deoxyribonucleoside 5'-triphosphate = DNA(n+1) + diphosphate. Its function is as follows. Required for replicative DNA synthesis. This DNA polymerase also exhibits 3' to 5' exonuclease activity. This is DNA polymerase III PolC-type from Thermotoga petrophila (strain ATCC BAA-488 / DSM 13995 / JCM 10881 / RKU-1).